The chain runs to 70 residues: Cytochrome c oxidase subunit 8B, mitochondrial (70 aa).

The N-terminal 24 residues, 1 to 24, are a transit peptide targeting the mitochondrion; the sequence is MPRLPPALRLLQPPLRCWVVPKLH. Residues 25-35 are Mitochondrial matrix-facing; sequence VSAKPARTPTS. A helical membrane pass occupies residues 36–59; it reads PAEQAVGLSMMFLSFLVPAGWVLS. Residues 60–70 are Mitochondrial intermembrane-facing; the sequence is HLESYKKSSTA.

It belongs to the cytochrome c oxidase VIII family. In terms of assembly, component of the cytochrome c oxidase (complex IV, CIV), a multisubunit enzyme composed of 14 subunits. The complex is composed of a catalytic core of 3 subunits MT-CO1, MT-CO2 and MT-CO3, encoded in the mitochondrial DNA, and 11 supernumerary subunits COX4I, COX5A, COX5B, COX6A, COX6B, COX6C, COX7A, COX7B, COX7C, COX8 and NDUFA4, which are encoded in the nuclear genome. The complex exists as a monomer or a dimer and forms supercomplexes (SCs) in the inner mitochondrial membrane with NADH-ubiquinone oxidoreductase (complex I, CI) and ubiquinol-cytochrome c oxidoreductase (cytochrome b-c1 complex, complex III, CIII), resulting in different assemblies (supercomplex SCI(1)III(2)IV(1) and megacomplex MCI(2)III(2)IV(2)).

Its subcellular location is the mitochondrion inner membrane. It functions in the pathway energy metabolism; oxidative phosphorylation. Its function is as follows. Component of the cytochrome c oxidase, the last enzyme in the mitochondrial electron transport chain which drives oxidative phosphorylation. The respiratory chain contains 3 multisubunit complexes succinate dehydrogenase (complex II, CII), ubiquinol-cytochrome c oxidoreductase (cytochrome b-c1 complex, complex III, CIII) and cytochrome c oxidase (complex IV, CIV), that cooperate to transfer electrons derived from NADH and succinate to molecular oxygen, creating an electrochemical gradient over the inner membrane that drives transmembrane transport and the ATP synthase. Cytochrome c oxidase is the component of the respiratory chain that catalyzes the reduction of oxygen to water. Electrons originating from reduced cytochrome c in the intermembrane space (IMS) are transferred via the dinuclear copper A center (CU(A)) of subunit 2 and heme A of subunit 1 to the active site in subunit 1, a binuclear center (BNC) formed by heme A3 and copper B (CU(B)). The BNC reduces molecular oxygen to 2 water molecules using 4 electrons from cytochrome c in the IMS and 4 protons from the mitochondrial matrix. This is Cytochrome c oxidase subunit 8B, mitochondrial (COX8B) from Eulemur fulvus fulvus (Brown lemur).